The chain runs to 257 residues: MNKIIEVNNVSYHYDKEHALENIHFQVEKGSFTGLIGPNGSGKSTMLKLILGVLKKQQGSIALFGEKQADFKDWVKIGFVSQKSNAFNSAFPATVKEVVASGLTKKKGLFKTLNNQDKEAIDYALKRVEMTDYLHRNIGELSGGQQQRVFIARALVSRPELLILDEPTVGVDVENVKAFYELLAELNRTEEMTLLLVTHDLVAVNTYVNHVISINKRIIFDGSAHEYQHYLADRELEILAEQRRREDACLDCDASPV.

In terms of domain architecture, ABC transporter spans 5-241 (IEVNNVSYHY…ADRELEILAE (237 aa)). 37–44 (GPNGSGKS) is an ATP binding site.

The protein belongs to the ABC transporter superfamily.

Its function is as follows. Involved in a zinc uptake transport system. In Listeria innocua serovar 6a (strain ATCC BAA-680 / CLIP 11262), this protein is Zinc uptake system ATP-binding protein ZurA (zurA).